Reading from the N-terminus, the 450-residue chain is Phosphoglucosamine mutase (450 aa).

Catalysis depends on Ser104, which acts as the Phosphoserine intermediate. Mg(2+) is bound by residues Ser104, Asp241, Asp243, and Asp245. Residue Ser104 is modified to Phosphoserine.

It belongs to the phosphohexose mutase family. Requires Mg(2+) as cofactor. Activated by phosphorylation.

It carries out the reaction alpha-D-glucosamine 1-phosphate = D-glucosamine 6-phosphate. Functionally, catalyzes the conversion of glucosamine-6-phosphate to glucosamine-1-phosphate. The sequence is that of Phosphoglucosamine mutase from Renibacterium salmoninarum (strain ATCC 33209 / DSM 20767 / JCM 11484 / NBRC 15589 / NCIMB 2235).